The following is a 205-amino-acid chain: MTTDFLFPKIADCSYVSCYCEENVWKLCEQVKRTRPEELSKCYAVFVSNEGRTVPLWRQKAGRGDDQVVIWDYHVFFMHNPSPNRCLVFDLDTTLPFPTYFHKYVTETFRSDLALRPEHHRFFRVIPADTYLIEFSSDRRHMRRPDGSWIKPPPSYPPILSNTNLHCLGDFICMSAGKGPGAVYSLSEFVHNFYKSPHVMAQNNK.

Residues C20, H74, and D90 contribute to the active site.

This sequence belongs to the NTAQ1 family. As to quaternary structure, monomer.

It carries out the reaction N-terminal L-glutaminyl-[protein] + H2O = N-terminal L-glutamyl-[protein] + NH4(+). Its function is as follows. Mediates the side-chain deamidation of N-terminal glutamine residues to glutamate, an important step in N-end rule pathway of protein degradation. Conversion of the resulting N-terminal glutamine to glutamate renders the protein susceptible to arginylation, polyubiquitination and degradation as specified by the N-end rule. Does not act on substrates with internal or C-terminal glutamine and does not act on non-glutamine residues in any position. This chain is Protein N-terminal glutamine amidohydrolase (tun), found in Drosophila ananassae (Fruit fly).